The primary structure comprises 392 residues: Potassium/proton antiporter CemA (392 aa).

4 consecutive transmembrane segments (helical) span residues 174–194 (FLAS…VWWL), 269–289 (SLAN…MLSL), 316–336 (FLIL…WEVI), and 352–372 (FIFM…KYWI).

The protein belongs to the CemA family.

The protein localises to the plastid. Its subcellular location is the chloroplast inner membrane. It catalyses the reaction K(+)(in) + H(+)(out) = K(+)(out) + H(+)(in). Functionally, contributes to K(+)/H(+) antiport activity by supporting proton efflux to control proton extrusion and homeostasis in chloroplasts in a light-dependent manner to modulate photosynthesis. Prevents excessive induction of non-photochemical quenching (NPQ) under continuous-light conditions. Indirectly promotes efficient inorganic carbon uptake into chloroplasts. The chain is Potassium/proton antiporter CemA from Nephroselmis olivacea (Green alga).